The sequence spans 225 residues: Respiratory nitrate reductase 1 gamma chain (225 aa).

Met1 carries the N-formylmethionine modification. The Periplasmic portion of the chain corresponds to 1-3; it reads MQF. The helical transmembrane segment at 4 to 29 threads the bilayer; the sequence is LNMFFFDIYPYIAGAVFLIGSWLRYD. Residues 30-47 are Cytoplasmic-facing; the sequence is YGQYTWRAASSQMLDRKG. A helical transmembrane segment spans residues 48 to 70; sequence MNLASNLFHIGILGIFVGHFFGM. Residues His56 and His66 each coordinate heme b. The Periplasmic portion of the chain corresponds to 71 to 82; it reads LTPHWMYEAWLP. The helical transmembrane segment at 83–112 threads the bilayer; that stretch reads IEVKQKMAMFAGGASGVLCLIGGVLLLKRR. The Cytoplasmic segment spans residues 113 to 124; the sequence is LFSPRVRATTTG. The chain crosses the membrane as a helical span at residues 125–148; sequence ADILILSLLVIQCALGLLTIPFSA. At 149–182 the chain is on the periplasmic side; sequence QHMDGSEMMKLVGWAQSVVTFHGGASQHLDGVAF. A helical membrane pass occupies residues 183–198; that stretch reads IFRLHLVLGMTLFLLF. The heme b site is built by His187 and His205. Over 199-225 the chain is Cytoplasmic; the sequence is PFSRLIHIWSVPVEYLTRKYQLVRARH.

In terms of assembly, dimer of heterotrimers each composed of an alpha, a beta and a gamma chain. Alpha and beta are catalytic chains; gamma chains are involved in binding the enzyme complex to the cytoplasmic membrane. Heme is required as a cofactor.

It localises to the cell inner membrane. It catalyses the reaction nitrate + a quinol = a quinone + nitrite + H2O. The nitrate reductase enzyme complex allows E.coli to use nitrate as an electron acceptor during anaerobic growth. The gamma chain is a membrane-embedded heme-iron unit resembling cytochrome b, which transfers electrons from quinones to the beta subunit. This chain is Respiratory nitrate reductase 1 gamma chain (narI), found in Escherichia coli (strain K12).